Here is a 507-residue protein sequence, read N- to C-terminus: ATP synthase subunit alpha, plastid (507 aa).

Residue 170 to 177 (GDRQTGKT) coordinates ATP.

Belongs to the ATPase alpha/beta chains family. F-type ATPases have 2 components, CF(1) - the catalytic core - and CF(0) - the membrane proton channel. CF(1) has five subunits: alpha(3), beta(3), gamma(1), delta(1), epsilon(1). CF(0) has four main subunits: a, b, b' and c.

The protein resides in the plastid membrane. It catalyses the reaction ATP + H2O + 4 H(+)(in) = ADP + phosphate + 5 H(+)(out). Produces ATP from ADP in the presence of a proton gradient across the membrane. The alpha chain is a regulatory subunit. This chain is ATP synthase subunit alpha, plastid, found in Cuscuta obtusiflora (Peruvian dodder).